A 547-amino-acid chain; its full sequence is Glucose-6-phosphate isomerase 2 (547 aa).

The active-site Proton donor is the E351. Residues H382 and K508 contribute to the active site.

Belongs to the GPI family.

Its subcellular location is the cytoplasm. The enzyme catalyses alpha-D-glucose 6-phosphate = beta-D-fructose 6-phosphate. It participates in carbohydrate biosynthesis; gluconeogenesis. The protein operates within carbohydrate degradation; glycolysis; D-glyceraldehyde 3-phosphate and glycerone phosphate from D-glucose: step 2/4. Catalyzes the reversible isomerization of glucose-6-phosphate to fructose-6-phosphate. This is Glucose-6-phosphate isomerase 2 from Neisseria meningitidis serogroup B (strain ATCC BAA-335 / MC58).